Consider the following 188-residue polypeptide: dCTP deaminase (188 aa).

DCTP-binding positions include 111-116, 135-137, Gln156, Tyr170, Lys179, and Gln180; these read KSTYAR and TLE. Glu137 (proton donor/acceptor) is an active-site residue.

This sequence belongs to the dCTP deaminase family. As to quaternary structure, homotrimer.

The enzyme catalyses dCTP + H2O + H(+) = dUTP + NH4(+). Its pathway is pyrimidine metabolism; dUMP biosynthesis; dUMP from dCTP (dUTP route): step 1/2. Its function is as follows. Catalyzes the deamination of dCTP to dUTP. In Orientia tsutsugamushi (strain Ikeda) (Rickettsia tsutsugamushi), this protein is dCTP deaminase.